A 158-amino-acid polypeptide reads, in one-letter code: 6,7-dimethyl-8-ribityllumazine synthase (158 aa).

5-amino-6-(D-ribitylamino)uracil contacts are provided by residues Phe23, 61-63 (SFE), and 85-87 (AVI). 90–91 (ET) is a (2S)-2-hydroxy-3-oxobutyl phosphate binding site. The active-site Proton donor is His93. 5-amino-6-(D-ribitylamino)uracil is bound at residue Phe118. Arg132 contributes to the (2S)-2-hydroxy-3-oxobutyl phosphate binding site.

Belongs to the DMRL synthase family.

It carries out the reaction (2S)-2-hydroxy-3-oxobutyl phosphate + 5-amino-6-(D-ribitylamino)uracil = 6,7-dimethyl-8-(1-D-ribityl)lumazine + phosphate + 2 H2O + H(+). Its pathway is cofactor biosynthesis; riboflavin biosynthesis; riboflavin from 2-hydroxy-3-oxobutyl phosphate and 5-amino-6-(D-ribitylamino)uracil: step 1/2. Catalyzes the formation of 6,7-dimethyl-8-ribityllumazine by condensation of 5-amino-6-(D-ribitylamino)uracil with 3,4-dihydroxy-2-butanone 4-phosphate. This is the penultimate step in the biosynthesis of riboflavin. The sequence is that of 6,7-dimethyl-8-ribityllumazine synthase from Prochlorococcus marinus (strain AS9601).